The primary structure comprises 160 residues: Ureidoglycolate lyase (160 aa).

It belongs to the ureidoglycolate lyase family. In terms of assembly, homodimer. It depends on Ni(2+) as a cofactor.

The catalysed reaction is (S)-ureidoglycolate = urea + glyoxylate. Its pathway is nitrogen metabolism; (S)-allantoin degradation. In terms of biological role, catalyzes the catabolism of the allantoin degradation intermediate (S)-ureidoglycolate, generating urea and glyoxylate. Involved in the utilization of allantoin as nitrogen source. The chain is Ureidoglycolate lyase from Salmonella agona (strain SL483).